A 140-amino-acid polypeptide reads, in one-letter code: Large ribosomal subunit protein bL17 (140 aa).

The disordered stretch occupies residues 120-140 (EDAKGQDSGPVMVDEDDFAEA).

It belongs to the bacterial ribosomal protein bL17 family. Part of the 50S ribosomal subunit. Contacts protein L32.

This Erythrobacter litoralis (strain HTCC2594) protein is Large ribosomal subunit protein bL17.